The primary structure comprises 264 residues: Astacin-like metalloprotease toxin 1 (264 aa).

The first 16 residues, M1–C16, serve as a signal peptide directing secretion. A propeptide spanning residues H17–R51 is cleaved from the precursor. The Peptidase M12A domain occupies N52 to P249. Intrachain disulfides connect C93–C248 and C114–C135. Position 143 (H143) interacts with Zn(2+). E144 is an active-site residue. H147 and H153 together coordinate Zn(2+). N173 and N185 each carry an N-linked (GlcNAc...) asparagine glycan.

In terms of assembly, monomer. Requires Zn(2+) as cofactor. In terms of tissue distribution, expressed by the venom gland.

Its subcellular location is the secreted. With respect to regulation, inhibited by 1,10-phenanthroline. Its function is as follows. Zinc metalloprotease. Provoques deadhesion of endothelial cells from cell cultures, and also degradation of fibronectin, fibrinogen and gelatin in vitro. Its role in the venom is not fully understood but it might act as a spreading factor that facilitates diffusion of other venom toxins. Alternatively, it might be involved in the proteolytic processing of other venom toxins or it might play a role in extra-oral digestion of prey. This Loxosceles intermedia (Brown spider) protein is Astacin-like metalloprotease toxin 1.